Consider the following 443-residue polypeptide: Glutamyl-tRNA reductase (443 aa).

Residues 55–58, Ser-113, 118–120, and Gln-124 contribute to the substrate site; these read TCNR and EPQ. Catalysis depends on Cys-56, which acts as the Nucleophile. 193 to 198 serves as a coordination point for NADP(+); the sequence is GAGEMI.

It belongs to the glutamyl-tRNA reductase family. As to quaternary structure, homodimer.

It carries out the reaction (S)-4-amino-5-oxopentanoate + tRNA(Glu) + NADP(+) = L-glutamyl-tRNA(Glu) + NADPH + H(+). It functions in the pathway porphyrin-containing compound metabolism; protoporphyrin-IX biosynthesis; 5-aminolevulinate from L-glutamyl-tRNA(Glu): step 1/2. It participates in porphyrin-containing compound metabolism; chlorophyll biosynthesis. Functionally, catalyzes the NADPH-dependent reduction of glutamyl-tRNA(Glu) to glutamate 1-semialdehyde (GSA). The polypeptide is Glutamyl-tRNA reductase (Methylibium petroleiphilum (strain ATCC BAA-1232 / LMG 22953 / PM1)).